Reading from the N-terminus, the 831-residue chain is Probable DNA-directed RNA polymerase (831 aa).

Catalysis depends on residues D490, K560, and D738.

The protein belongs to the phage and mitochondrial RNA polymerase family.

Its subcellular location is the mitochondrion. The enzyme catalyses RNA(n) + a ribonucleoside 5'-triphosphate = RNA(n+1) + diphosphate. Its function is as follows. DNA-dependent RNA polymerase catalyzes the transcription of DNA into RNA using the four ribonucleoside triphosphates as substrates. The polypeptide is Probable DNA-directed RNA polymerase (Gelasinospora sp. (strain G114)).